A 174-amino-acid polypeptide reads, in one-letter code: Large ribosomal subunit protein uL10 (174 aa).

Belongs to the universal ribosomal protein uL10 family. In terms of assembly, part of the ribosomal stalk of the 50S ribosomal subunit. The N-terminus interacts with L11 and the large rRNA to form the base of the stalk. The C-terminus forms an elongated spine to which L12 dimers bind in a sequential fashion forming a multimeric L10(L12)X complex.

Its function is as follows. Forms part of the ribosomal stalk, playing a central role in the interaction of the ribosome with GTP-bound translation factors. In Synechococcus sp. (strain RCC307), this protein is Large ribosomal subunit protein uL10.